The primary structure comprises 238 residues: tRNA (guanine-N(7)-)-methyltransferase (238 aa).

4 residues coordinate S-adenosyl-L-methionine: Glu-70, Asp-95, Asp-122, and Asp-145. Asp-145 is an active-site residue. Residues Lys-149, Asp-181, and 216 to 219 (TKFE) each bind substrate.

Belongs to the class I-like SAM-binding methyltransferase superfamily. TrmB family.

It catalyses the reaction guanosine(46) in tRNA + S-adenosyl-L-methionine = N(7)-methylguanosine(46) in tRNA + S-adenosyl-L-homocysteine. Its pathway is tRNA modification; N(7)-methylguanine-tRNA biosynthesis. Its function is as follows. Catalyzes the formation of N(7)-methylguanine at position 46 (m7G46) in tRNA. This is tRNA (guanine-N(7)-)-methyltransferase from Neisseria gonorrhoeae (strain ATCC 700825 / FA 1090).